Here is a 387-residue protein sequence, read N- to C-terminus: Alkanesulfonate monooxygenase (387 aa).

The interval 365 to 387 (HNSGPFGETVGNDYRPSRLASQS) is disordered.

The protein belongs to the SsuD family.

It catalyses the reaction an alkanesulfonate + FMNH2 + O2 = an aldehyde + FMN + sulfite + H2O + 2 H(+). In terms of biological role, catalyzes the desulfonation of aliphatic sulfonates. In Bradyrhizobium diazoefficiens (strain JCM 10833 / BCRC 13528 / IAM 13628 / NBRC 14792 / USDA 110), this protein is Alkanesulfonate monooxygenase.